The following is a 623-amino-acid chain: Chaperone protein DnaK (623 aa).

Thr-197 is modified (phosphothreonine; by autocatalysis). Basic and acidic residues predominate over residues 595–615 (AENMYKKDEPNTANDKKKKDD). The interval 595-623 (AENMYKKDEPNTANDKKKKDDDVIDAEVE) is disordered.

It belongs to the heat shock protein 70 family.

In terms of biological role, acts as a chaperone. The protein is Chaperone protein DnaK of Campylobacter jejuni subsp. jejuni serotype O:6 (strain 81116 / NCTC 11828).